The primary structure comprises 521 residues: Protein nucleotidyltransferase YdiU (521 aa).

Residues G109, G111, R112, K131, D143, G144, R194, and R201 each contribute to the ATP site. D270 acts as the Proton acceptor in catalysis. Residues N271 and D280 each coordinate Mg(2+). D280 is an ATP binding site.

The protein belongs to the SELO family. It depends on Mg(2+) as a cofactor. Requires Mn(2+) as cofactor.

It carries out the reaction L-seryl-[protein] + ATP = 3-O-(5'-adenylyl)-L-seryl-[protein] + diphosphate. The enzyme catalyses L-threonyl-[protein] + ATP = 3-O-(5'-adenylyl)-L-threonyl-[protein] + diphosphate. The catalysed reaction is L-tyrosyl-[protein] + ATP = O-(5'-adenylyl)-L-tyrosyl-[protein] + diphosphate. It catalyses the reaction L-histidyl-[protein] + UTP = N(tele)-(5'-uridylyl)-L-histidyl-[protein] + diphosphate. It carries out the reaction L-seryl-[protein] + UTP = O-(5'-uridylyl)-L-seryl-[protein] + diphosphate. The enzyme catalyses L-tyrosyl-[protein] + UTP = O-(5'-uridylyl)-L-tyrosyl-[protein] + diphosphate. Nucleotidyltransferase involved in the post-translational modification of proteins. It can catalyze the addition of adenosine monophosphate (AMP) or uridine monophosphate (UMP) to a protein, resulting in modifications known as AMPylation and UMPylation. The polypeptide is Protein nucleotidyltransferase YdiU (Burkholderia pseudomallei (strain K96243)).